We begin with the raw amino-acid sequence, 351 residues long: tRNA N6-adenosine threonylcarbamoyltransferase (351 aa).

2 residues coordinate Fe cation: histidine 124 and histidine 128. Residues 146–150 (LVSGG), aspartate 180, glycine 193, aspartate 197, and asparagine 285 contribute to the substrate site. Aspartate 313 contributes to the Fe cation binding site.

The protein belongs to the KAE1 / TsaD family. Fe(2+) serves as cofactor.

It is found in the cytoplasm. The enzyme catalyses L-threonylcarbamoyladenylate + adenosine(37) in tRNA = N(6)-L-threonylcarbamoyladenosine(37) in tRNA + AMP + H(+). Required for the formation of a threonylcarbamoyl group on adenosine at position 37 (t(6)A37) in tRNAs that read codons beginning with adenine. Is involved in the transfer of the threonylcarbamoyl moiety of threonylcarbamoyl-AMP (TC-AMP) to the N6 group of A37, together with TsaE and TsaB. TsaD likely plays a direct catalytic role in this reaction. The sequence is that of tRNA N6-adenosine threonylcarbamoyltransferase from Mycobacterium leprae (strain TN).